We begin with the raw amino-acid sequence, 371 residues long: Chaperone protein DnaJ (371 aa).

Residues 6–71 (DYYEILGVEK…QKRAQYDRFG (66 aa)) enclose the J domain. The tract at residues 104–123 (GGMGGQQRQRRNRNEPRRGS) is disordered. Residues 139–217 (GIEKEIEFDT…CKGKGRVAEH (79 aa)) form a CR-type zinc finger. The Zn(2+) site is built by cysteine 152, cysteine 155, cysteine 169, cysteine 172, cysteine 191, cysteine 194, cysteine 205, and cysteine 208. CXXCXGXG motif repeat units follow at residues 152–159 (CDECKGTG), 169–176 (CGTCGGSG), 191–198 (CPTCHGQG), and 205–212 (CKPCKGKG).

The protein belongs to the DnaJ family. In terms of assembly, homodimer. It depends on Zn(2+) as a cofactor.

The protein localises to the cytoplasm. Participates actively in the response to hyperosmotic and heat shock by preventing the aggregation of stress-denatured proteins and by disaggregating proteins, also in an autonomous, DnaK-independent fashion. Unfolded proteins bind initially to DnaJ; upon interaction with the DnaJ-bound protein, DnaK hydrolyzes its bound ATP, resulting in the formation of a stable complex. GrpE releases ADP from DnaK; ATP binding to DnaK triggers the release of the substrate protein, thus completing the reaction cycle. Several rounds of ATP-dependent interactions between DnaJ, DnaK and GrpE are required for fully efficient folding. Also involved, together with DnaK and GrpE, in the DNA replication of plasmids through activation of initiation proteins. In Bdellovibrio bacteriovorus (strain ATCC 15356 / DSM 50701 / NCIMB 9529 / HD100), this protein is Chaperone protein DnaJ.